We begin with the raw amino-acid sequence, 1073 residues long: MDGAKSGKQCHVCQICGDGVGTAADGELFTACDVCGFPVCRPCYEYERKDGSQACPQCKTKYKRHKGSPPILGDESDDVDADDASDVNYPTSGNQDHKHKIAERMLTWRMNSGRNDDIVHSKYDSGEIGHPKYDSGEIPRIYIPSLTHSQISGEIPGASPDHMMSPVGNIGRRGHPFPYVNHSPNPSREFSGSLGNVAWKERVDGWKMKDKGAIPMANGTSIAPSEGRGVGDIDASTDYNMEDALLNDETRQPLSRKVPISSSRINPYRMVIVLRLIVLCIFLHYRITNPVRNAYPLWLLSVICEIWFALSWILDQFPKWSPINRETYLDRLALRYDREGEPSQLAPVDIFVSTVDPMKEPPLVTANTVLSILAVDYPVDKVSCYVSDDGAAMLTFDALAETSEFARKWVPFCKKYSIEPRAPEWYFAQKIDYLKDKVQASFVKDRRAMKREYEEFKVRVNALVAKAQKVPEEGWIMQDGTPWPGNNTRDHPGMIQVFLGHSGGLDTEGNELPRLVYVSREKRPGFQHHKKAGAMNALVRVSAVLTNGQYLLNLDCDHYINNSKALREAMCFLMDPNLGRRVCYVQFPQRFDGIDRNDRYANRNTVFFDINLRGLDGLQGPVYVGTGCVFNRTALYGYEPPIKQKRPGYFSSLCGGRKKTKKSKEKSTEKKKSHKHVDSSVPVFNLEDIEEGIEGSGFDDEKSLLMSQMSLEKRFGQSSVFVASTLMEYGGVPQSATPESLLKEAIHVISCGYEDKSDWGTEIGWIYGSVTEDILTGFKMHARGWRSIYCMPKRPAFKGSAPINLSDRLNQVLRWALGSVEILFSRHCPIWYGYGGRLKFLERFAYINTTIYPLTSIPLLLYCILPAICLLTGKFIIPEISNFASIWFISLFLSIFATGILEMRWSGVGIDEWWRNEQFWVIGGISAHLFAVFQGLLKVLAGIDTSFTVTSKASDEEGDFAELYMFKWTTLLIPPTTILIINLVGVVAGISYAINSGYQSWGPLFGKLFFAFWVIVHLYPFLKGLMGRQNRTPTIVVVWAILLASIFSLLWVRIDPFTTRVTGPDTQKCGINC.

The Cytoplasmic segment spans residues 1–270 (MDGAKSGKQC…SSSRINPYRM (270 aa)). Residues Cys-13, Cys-16, Cys-32, Cys-35, Cys-40, Cys-43, Cys-55, and Cys-58 each coordinate Zn(2+). The RING-type; degenerate zinc finger occupies 13-59 (CQICGDGVGTAADGELFTACDVCGFPVCRPCYEYERKDGSQACPQCK). The disordered stretch occupies residues 66-98 (KGSPPILGDESDDVDADDASDVNYPTSGNQDHK). A compositionally biased stretch (acidic residues) spans 74 to 85 (DESDDVDADDAS). Residues 271–291 (VIVLRLIVLCIFLHYRITNPV) form a helical membrane-spanning segment. Topologically, residues 292 to 293 (RN) are extracellular. Residues 294–314 (AYPLWLLSVICEIWFALSWIL) traverse the membrane as a helical segment. The Cytoplasmic portion of the chain corresponds to 315 to 856 (DQFPKWSPIN…INTTIYPLTS (542 aa)). Ser-353, Lys-359, Glu-360, and Asp-389 together coordinate UDP-alpha-D-glucose. Asp-389 is a catalytic residue. Positions 443–470 (VKDRRAMKREYEEFKVRVNALVAKAQKV) form a coiled coil. Lys-530 contacts UDP-alpha-D-glucose. The Mn(2+) site is built by Lys-531 and Asp-555. The disordered stretch occupies residues 655 to 676 (GGRKKTKKSKEKSTEKKKSHKH). The active site involves Asp-773. The chain crosses the membrane as a helical span at residues 857-877 (IPLLLYCILPAICLLTGKFII). The Extracellular portion of the chain corresponds to 878 to 882 (PEISN). A helical transmembrane segment spans residues 883 to 903 (FASIWFISLFLSIFATGILEM). Topologically, residues 904-918 (RWSGVGIDEWWRNEQ) are cytoplasmic. A helical membrane pass occupies residues 919–939 (FWVIGGISAHLFAVFQGLLKV). The Extracellular segment spans residues 940–969 (LAGIDTSFTVTSKASDEEGDFAELYMFKWT). A helical membrane pass occupies residues 970-990 (TLLIPPTTILIINLVGVVAGI). The Cytoplasmic segment spans residues 991–1001 (SYAINSGYQSW). Residues 1002-1022 (GPLFGKLFFAFWVIVHLYPFL) traverse the membrane as a helical segment. At 1023–1031 (KGLMGRQNR) the chain is on the extracellular side. Residues 1032–1052 (TPTIVVVWAILLASIFSLLWV) traverse the membrane as a helical segment. At 1053-1073 (RIDPFTTRVTGPDTQKCGINC) the chain is on the cytoplasmic side.

Belongs to the glycosyltransferase 2 family. Plant cellulose synthase subfamily. It depends on Mn(2+) as a cofactor. The cofactor is Zn(2+).

It localises to the cell membrane. It catalyses the reaction [(1-&gt;4)-beta-D-glucosyl](n) + UDP-alpha-D-glucose = [(1-&gt;4)-beta-D-glucosyl](n+1) + UDP + H(+). Its pathway is glycan metabolism; plant cellulose biosynthesis. In terms of biological role, probable catalytic subunit of cellulose synthase terminal complexes ('rosettes'), required for beta-1,4-glucan microfibril crystallization, a major mechanism of the cell wall formation. This Oryza sativa subsp. japonica (Rice) protein is Probable cellulose synthase A catalytic subunit 2 [UDP-forming] (CESA2).